The following is a 125-amino-acid chain: Protein ApaG (125 aa).

One can recognise an ApaG domain in the interval 1–125; it reads MIDAPRIIVQ…FRLAIPSLIN (125 aa).

This chain is Protein ApaG, found in Edwardsiella ictaluri (strain 93-146).